Reading from the N-terminus, the 480-residue chain is Ribosomal protein uS12 methylthiotransferase RimO (480 aa).

The MTTase N-terminal domain maps to 37–147 (NRIGFVSLGC…VLKHVHKYVP (111 aa)). 6 residues coordinate [4Fe-4S] cluster: Cys46, Cys82, Cys111, Cys179, Cys183, and Cys186. The region spanning 165-402 (LTPKHYAYLK…MEVQAEISAE (238 aa)) is the Radical SAM core domain. The 67-residue stretch at 405 to 471 (ARFVGRTMDI…EHDLWAELVD (67 aa)) folds into the TRAM domain.

This sequence belongs to the methylthiotransferase family. RimO subfamily. [4Fe-4S] cluster serves as cofactor.

The protein localises to the cytoplasm. It catalyses the reaction L-aspartate(89)-[ribosomal protein uS12]-hydrogen + (sulfur carrier)-SH + AH2 + 2 S-adenosyl-L-methionine = 3-methylsulfanyl-L-aspartate(89)-[ribosomal protein uS12]-hydrogen + (sulfur carrier)-H + 5'-deoxyadenosine + L-methionine + A + S-adenosyl-L-homocysteine + 2 H(+). Its function is as follows. Catalyzes the methylthiolation of an aspartic acid residue of ribosomal protein uS12. In Shewanella sp. (strain ANA-3), this protein is Ribosomal protein uS12 methylthiotransferase RimO.